Consider the following 424-residue polypeptide: L-glutamine:2-deoxy-scyllo-inosose aminotransferase (424 aa).

N6-(pyridoxal phosphate)lysine is present on Lys202.

This sequence belongs to the DegT/DnrJ/EryC1 family. L-glutamine:2-deoxy-scyllo-inosose/scyllo-inosose aminotransferase subfamily. Pyridoxal 5'-phosphate is required as a cofactor.

It catalyses the reaction 2-deoxy-L-scyllo-inosose + L-glutamine = 2-deoxy-scyllo-inosamine + 2-oxoglutaramate. The enzyme catalyses 3-amino-2,3-dideoxy-scyllo-inosose + L-glutamine = 2-deoxystreptamine + 2-oxoglutaramate. The protein operates within metabolic intermediate biosynthesis; 2-deoxystreptamine biosynthesis; 2-deoxystreptamine from D-glucose 6-phosphate: step 2/4. It participates in metabolic intermediate biosynthesis; 2-deoxystreptamine biosynthesis; 2-deoxystreptamine from D-glucose 6-phosphate: step 4/4. It functions in the pathway antibiotic biosynthesis; paromomycin biosynthesis. Functionally, catalyzes the PLP-dependent transamination of 2-deoxy-scyllo-inosose (2-DOI) to form 2-deoxy-scyllo-inosamine (2-DOIA) using L-glutamine as the amino donor. Also catalyzes the transamination of 3-amino-2,3-dideoxy-scyllo-inosose (keto-2-DOIA) into 2-deoxystreptamine (2-DOS). This is L-glutamine:2-deoxy-scyllo-inosose aminotransferase (parS) from Streptomyces paromomycinus (Streptomyces rimosus subsp. paromomycinus).